A 350-amino-acid polypeptide reads, in one-letter code: MSASPTAGQAGLSYRDAGVDIEAGDALVDRIKPFAKRTMREGVMAGIGGFGALFELSKKYQEPVLVSGTDGVGTKLKLAFQLNRHDTVGQDLVAMSVNDILVQGAEPLFFLDYFACGKLDVETAATVIKGIAHGCELAGCALIGGETAEMPSMYPDGEYDLAGFAVGAVEKKKIIDGSTITPGDVVLGLASSGAHSNGYSLVRKIIDVARPNLDADFHGQRLQDAIMAPTRIYVKPLLSLIETLPVKGMAHITGGGLTENVPRVLADNVTAVIQRDAWTLPPLFQWLQAEGRVADAEMHRVFNCGIGMVVIVAKEDAERAIRHLQAAGEAVWQIGEIRERAEGQAQTVVV.

Belongs to the AIR synthase family.

The protein localises to the cytoplasm. The catalysed reaction is 2-formamido-N(1)-(5-O-phospho-beta-D-ribosyl)acetamidine + ATP = 5-amino-1-(5-phospho-beta-D-ribosyl)imidazole + ADP + phosphate + H(+). It participates in purine metabolism; IMP biosynthesis via de novo pathway; 5-amino-1-(5-phospho-D-ribosyl)imidazole from N(2)-formyl-N(1)-(5-phospho-D-ribosyl)glycinamide: step 2/2. The sequence is that of Phosphoribosylformylglycinamidine cyclo-ligase from Cupriavidus metallidurans (strain ATCC 43123 / DSM 2839 / NBRC 102507 / CH34) (Ralstonia metallidurans).